A 299-amino-acid polypeptide reads, in one-letter code: Circadian clock oscillator protein KaiA (299 aa).

A psR domain, binds oxidized quinones region spans residues 1–135 (MQSPLSLCLF…LHLGPICTLP (135 aa)). Residues 1–169 (MQSPLSLCLF…RLADKLKERL (169 aa)) enclose the KaiA N-terminal domain. Residues 170-178 (GYLGVYYKR) are flexible linker. In terms of domain architecture, KaiA C-terminal spans 179–287 (KPSHFYRNFS…GEMYRRSIPR (109 aa)).

It belongs to the KaiA family. As to quaternary structure, homodimer. The KaiABC1 complex composition changes during the circadian cycle to control KaiC1 phosphorylation. Complexes KaiC1(6), KaiA(2-4):KaiC1(6), KaiB(6):KaiC1(6) and KaiC1(6):KaiB(6):KaiA(12) are among the most important forms, many form cooperatively. KaiA and CikA bind to the same region of the KaiB(fs) form and therefore compete. Interacts with KaiC1 but not KaiC2 or KaiC3. Interacts with itself, not seen to interact with other Kai proteins.

Key component of the KaiABC oscillator complex, which constitutes the main circadian regulator in cyanobacteria. Complex composition changes during the circadian cycle to control KaiC phosphorylation. KaiA stimulates KaiC autophosphorylation, while KaiB sequesters KaiA, leading to KaiC autodephosphorylation. KaiA binding to the KaiC CII domain during the subjective day yields KaiA(2-4):KaiC(6) complexes which stimulate KaiC autophosphorylation. Phospho-Ser-431 KaiC accumulation triggers binding of KaiB during the subjective night to form the KaiB(6):KaiC(6) complex, leading to changes in the output regulators CikA and SasA. KaiB(6):KaiC(6) formation exposes a site for KaiA binding on KaiB that sequesters KaiA from KaiC's CII domain, making the KaiC(6):KaiB(6):KaiA(12) complex resulting in KaiC autodephosphorylation. Complete dephosphorylation of KaiC leads to dissociation of KaiA(2):KaiB(1), completing 1 cycle of the Kai oscillator. Functionally, component of the oscillator and circadian clock in this organism, enhances fitness in a rhythmic environment. Stimulates KaiC1 to autophosphorylate, has no effect on the kinase activity of KaiC2 or KaiC3. In terms of biological role, binds oxidized quinones via the N-terminal PsR domain, allowing it to sense redox changes and possibly mediate clock input. The chain is Circadian clock oscillator protein KaiA from Synechocystis sp. (strain ATCC 27184 / PCC 6803 / Kazusa).